Here is a 541-residue protein sequence, read N- to C-terminus: MLSPQRTAAVASRGAGDAMENGKPGPVQVVLVHKEQHSFELEERALASVLLQDHIRDLDVVVVSVAGAFRKGKSFILDFMLRYLYSQKEHGHSNWLGDPEEPLTGFSWRGGSDPETTGIQIWSEVFTVKKPCGKEVAVVLMDTQGAFDSQSTVKDCATIFALSTMTSSVQIYNLSQNIQEDDLQQLQLFTEYGRLAMDEIFQKPFQTLMFLVRDWSFPYEYNYGLQGGMSFLDKRLQVKEHQHEEIQNVRNHIHSCFSDVTCFLLPHPGLQVATSPDFDGKLKEYIASEFKEQLQTLIPYVLNPSKLMEKEINGSKVTCRGLLEYFKAYIKIYQGEDLPHPKSMLQATAANNLAAAASAKDIYYSSMEEICGGEKPYLSPDILEEKHQEFKQLALDHFKKTKKMGGKDFSFRYQQELEEEITELYENFCKHNGSKNVFSTFRTPAVLFTGIAVLYIASGLTGFIGLEVVAQLFNCMVGLLLIALLTWGYIRYSGQYLELGGAIDSGAAYVLEQASSHIGNSTQAAVRDAIAGRPPADKKSQ.

The interval 1-22 (MLSPQRTAAVASRGAGDAMENG) is disordered. The N-terminal hypervariable region (HVR) stretch occupies residues 1–25 (MLSPQRTAAVASRGAGDAMENGKPG). Residues 1–445 (MLSPQRTAAV…NVFSTFRTPA (445 aa)) lie on the Cytoplasmic side of the membrane. Residues 57 to 306 (DLDVVVVSVA…LIPYVLNPSK (250 aa)) enclose the GB1/RHD3-type G domain. The GDP site is built by R70, K71, G72, K73, S74, F75, and R109. D142 contacts Mg(2+). 4 residues coordinate GDP: R213, D214, V272, and S275. Residues 344 to 434 (MLQATAANNL…YENFCKHNGS (91 aa)) are 3HB (three-helix bundle) domain. Residue K391 is modified to N6-acetyllysine. The helical transmembrane segment at 446–466 (VLFTGIAVLYIASGLTGFIGL) threads the bilayer. E467 is a topological domain (lumenal). Residues 468-488 (VVAQLFNCMVGLLLIALLTWG) form a helical membrane-spanning segment. Over 489–541 (YIRYSGQYLELGGAIDSGAAYVLEQASSHIGNSTQAAVRDAIAGRPPADKKSQ) the chain is Cytoplasmic.

This sequence belongs to the TRAFAC class dynamin-like GTPase superfamily. GB1/RHD3 GTPase family. GB1 subfamily. As to quaternary structure, monomeric and homodimeric. The homodimer, transiently formed by two molecules on opposing membranes, is the active form mediating ER membrane fusion. Interacts with ZFYVE27; both proteins are involved in endoplasmic reticulum tubular network organization. Interacts with REEP5; both proteins are involved in endoplasmic reticulum tubular network organization.

It localises to the endoplasmic reticulum membrane. The catalysed reaction is GTP + H2O = GDP + phosphate + H(+). Its function is as follows. Atlastin-3 (ATL3) is a membrane-anchored GTPase that mediates the GTP-dependent fusion of endoplasmic reticulum (ER) membranes, maintaining the continuous ER network. It facilitates the formation of three-way junctions where ER tubules intersect. Two atlastin-3 on neighboring ER tubules bind GTP and form loose homodimers through the GB1/RHD3-type G domains and 3HB regions. Upon GTP hydrolysis, the 3HB regions tighten, pulling the membranes together to drive their fusion. After fusion, the homodimer disassembles upon release of inorganic phosphate (Pi). Subsequently, GDP dissociates, resetting the monomers to a conformation ready for a new fusion cycle. The protein is Atlastin-3 of Rattus norvegicus (Rat).